A 239-amino-acid chain; its full sequence is uncharacterized protein (239 aa).

7 consecutive transmembrane segments (helical) span residues 20–40 (ILIWVQCLILMSVCAFCWLVL), 48–68 (FSSVRLTLSCLMISIVCLGLL), 80–100 (WILLTYTLLTSVAVTASGFHF), 106–126 (IYAMVATVTLFCFLTLATYLF), 143–163 (LILLLFAVFSLFPEAVSEILV), 164–184 (MIAGLAVIVTSVVCDTQDILH), and 192–212 (IPGALCLYMDLMYLFVSVLYF).

The protein belongs to the cytomegalovirus US12 family.

Its subcellular location is the membrane. This is an uncharacterized protein from Homo sapiens (Human).